Consider the following 467-residue polypeptide: UPF0236 protein TTE0610/TTE0881/TTE1053/TTE2432 (467 aa).

This sequence belongs to the UPF0236 family.

This Caldanaerobacter subterraneus subsp. tengcongensis (strain DSM 15242 / JCM 11007 / NBRC 100824 / MB4) (Thermoanaerobacter tengcongensis) protein is UPF0236 protein TTE0610/TTE0881/TTE1053/TTE2432.